A 241-amino-acid chain; its full sequence is DNA repair protein RecO (241 aa).

Belongs to the RecO family.

In terms of biological role, involved in DNA repair and RecF pathway recombination. The protein is DNA repair protein RecO of Vibrio cholerae serotype O1 (strain ATCC 39541 / Classical Ogawa 395 / O395).